Reading from the N-terminus, the 276-residue chain is 28 kDa ribonucleoprotein, chloroplastic (276 aa).

The transit peptide at 1–57 directs the protein to the chloroplast; it reads MATNGCLISLPPFFTTTKSISSYPFLSTQLKPISLSSSLPTLLSLNKRTTQFPTFVS. RRM domains lie at 97-175 and 191-269; these read AKLF…KAAP and YRIY…AAEE.

It localises to the plastid. The protein resides in the chloroplast. Functionally, probably involved in the 3'-end processing of chloroplast mRNA's. The sequence is that of 28 kDa ribonucleoprotein, chloroplastic from Nicotiana sylvestris (Wood tobacco).